The sequence spans 770 residues: Probable methyltransferase PMT24 (770 aa).

The Cytoplasmic portion of the chain corresponds to 1–17 (MAMGKYSRVDGKKSSGY). The chain crosses the membrane as a helical; Signal-anchor for type II membrane protein span at residues 18–38 (GLTITIVLIVSLCLVGAWMFM). Residues 39-770 (SSWSAPTESI…EAETIQSAIA (732 aa)) lie on the Lumenal side of the membrane. Basic and acidic residues-rich tracts occupy residues 54–81 (ERTK…FPDE) and 93–164 (NEEK…KSED). Residues 54-223 (ERTKDVDTTK…STGSGAWSTQ (170 aa)) form a disordered region. Residues Asn160 and Asn166 are each glycosylated (N-linked (GlcNAc...) asparagine). A compositionally biased stretch (polar residues) spans 212–223 (ESSTGSGAWSTQ). N-linked (GlcNAc...) asparagine glycosylation is found at Asn244 and Asn363.

Belongs to the methyltransferase superfamily.

It localises to the golgi apparatus membrane. This Arabidopsis thaliana (Mouse-ear cress) protein is Probable methyltransferase PMT24.